Here is a 475-residue protein sequence, read N- to C-terminus: Protein transport protein Sec61 subunit alpha (475 aa).

Topologically, residues 1–32 are cytoplasmic; that stretch reads MGFRFLDIVKPFTSLVPEVGQPDRKIPFREKV. The helical transmembrane segment at 33–53 threads the bilayer; the sequence is LWTAICLFIFLVCSQIPLYGI. The Lumenal portion of the chain corresponds to 54–75; it reads RSTDSSDPFYWAKVIMASNRGT. A helical membrane pass occupies residues 76-96; the sequence is LMELGISPIVTSGMVMQLLAG. Topologically, residues 97-118 are cytoplasmic; the sequence is AKLIEIDQSVKADRDLFSAAQK. The chain crosses the membrane as a helical span at residues 119–139; the sequence is LFGMLICVGQGVAYIWSGSYG. At 140 to 145 the chain is on the lumenal side; it reads DPAVLG. A helical transmembrane segment spans residues 146–166; sequence FGNCFLIVLQLFFAGIIVMLL. At 167-173 the chain is on the cytoplasmic side; the sequence is DELLQKG. A helical transmembrane segment spans residues 174–194; sequence YGIGSGISLFIATNICETIVW. At 195–241 the chain is on the lumenal side; the sequence is KTFSPTTVSVGKGTEFEGAVIALFHLLLTRNDKVRALKEAFYRQNLP. The helical transmembrane segment at 242–262 threads the bilayer; sequence NITNLLATVLIFMVVIYFQGF. Topologically, residues 263-289 are cytoplasmic; the sequence is RVDLPVKSTRVSGQQGTYPIKLFYTSN. Residues 290–310 form a helical membrane-spanning segment; it reads IPIILQSALVSNLYFISQLLY. Residues 311 to 353 lie on the Lumenal side of the membrane; the sequence is RRFPDNILVNLFGAWRTSEYSQQMIPVSGLTYYISSPNNMSAV. Residues 354-374 traverse the membrane as a helical segment; the sequence is LADPFHALFYITFMLTSCALF. The Cytoplasmic portion of the chain corresponds to 375–411; the sequence is SKVWIEVSGSSARDVAKQLKDQQMTMKGHRDTSVIKE. A helical membrane pass occupies residues 412-434; sequence LNRYIPTAAAFGGLCIGALTVVA. Over 435 to 440 the chain is Lumenal; that stretch reads DFMGAI. The chain crosses the membrane as a helical span at residues 441–461; the sequence is GSGTGILLAVTIIYQYFETFV. The Cytoplasmic portion of the chain corresponds to 462 to 475; it reads KEQQELSGGIGGLF.

It belongs to the SecY/SEC61-alpha family. In terms of assembly, heterotrimeric complex composed of SEC61-alpha, SEC61-beta and SEC61-gamma.

It localises to the endoplasmic reticulum membrane. In terms of biological role, appears to play a crucial role in the insertion of secretory and membrane polypeptides into the ER. It is required for assembly of membrane and secretory proteins. Found to be tightly associated with membrane-bound ribosomes, either directly or through adaptor proteins. This chain is Protein transport protein Sec61 subunit alpha (sec61a), found in Dictyostelium discoideum (Social amoeba).